Reading from the N-terminus, the 479-residue chain is F-box/LRR-repeat protein 16 (479 aa).

The interval 1-92 (MSSPGIDGDP…GPVSGPPVER (92 aa)) is disordered. Pro residues predominate over residues 47–60 (CQPPPPPTLPPPSL). At arginine 92 the chain carries Omega-N-methylarginine. In terms of domain architecture, F-box spans 94-139 (PLATDEKILNGLFWYFSACEKCILAQVCKAWRRVLYQPKFWAGLTP). 6 LRR repeats span residues 321–342 (NLTSLSLSGCSKVTDDGVELVA), 347–369 (KLRSLDLSWCPRITDMALEYVAC), 373–394 (RLEELVLDRCVRITDTGLSYLS), 398–419 (SLRSLYLRWCCQVQDFGLKHLL), 423–444 (NLRLLSLAGCPLLTTTGLSGLV), and 446–470 (LQELEELELTNCPGATPELFKYFSQ).

In terms of assembly, interacts with SKP1 and CUL1.

In terms of biological role, substrate-recognition component of the SCF (SKP1-CUL1-F-box protein)-type E3 ubiquitin ligase complex. This chain is F-box/LRR-repeat protein 16 (Fbxl16), found in Mus musculus (Mouse).